We begin with the raw amino-acid sequence, 805 residues long: MDPKEKNYDASAITVLEGLQAVRERPGMYIGDTGITGLHHLVYEVVDNSIDEAMAGYCSRIDVRILEDGGIVIVDNGRGIPIEVHERESAKQGREVSALEVVLTVLHAGGKFDKDSYKVSGGLHGVGVSCVNALSEKLVATVFKDKKCYQMEFSRGIPVTPLQYVSVSDRQGTEIVFYPDPKIFSTCTFDRSILMKRLRELAFLNRGITIVFEDDRDVSFDKVTFFYEGGIQSFVSYLNQNKESLFSEPIYICGTRVGDDGEIEFEAALQWNSGYSELVYSYANNIPTRQGGTHLTGFSTALTRVINTYIKAHNLAKNNKLALTGEDIREGLTAVISVKVPNPQFEGQTKQKLGNSDVSSVAQQVVGEALTIFFEENPQIARMIVDKVFVAAQAREAAKKARELTLRKSALDSARLPGKLIDCLEKDPEKCEMYIVEGDSAGGSAKQGRDRRFQAILPIRGKILNVEKARLQKIFQNQEIGTIIAALGCGIGADNFNLSKLRYRRIIIMTDADVDGSHIRTLLLTFFYRHMTALIENECVYIAQPPLYKVSKKKDFRYILSEKEMDSYLLMLGTNESSILFKSTERELRGEALESFINVILDVESFINTLEKKAIPFSEFLEMYKEGIGYPLYYLAPATGMQGGRYLYSDEEKEEALAQEETHKFKIIELYKVAVFVDIQNQLKEYGLDISSYLIPQKNEIVIGNEDSPSCNYSCYTLEEVINYLKNLGRKGIEIQRYKGLGEMNADQLWDTTMNPEQRTLIHVSLKDAVEADHIFTMLMGEEVPPRREFIESHALSIRINNLDI.

The 116-residue stretch at 431–546 folds into the Toprim domain; that stretch reads CEMYIVEGDS…NECVYIAQPP (116 aa). 3 residues coordinate Mg(2+): glutamate 437, aspartate 511, and aspartate 513.

This sequence belongs to the type II topoisomerase GyrB family. Heterotetramer, composed of two GyrA and two GyrB chains. In the heterotetramer, GyrA contains the active site tyrosine that forms a transient covalent intermediate with DNA, while GyrB binds cofactors and catalyzes ATP hydrolysis. Mg(2+) is required as a cofactor. It depends on Mn(2+) as a cofactor. Ca(2+) serves as cofactor.

The protein resides in the cytoplasm. It catalyses the reaction ATP-dependent breakage, passage and rejoining of double-stranded DNA.. In terms of biological role, a type II topoisomerase that negatively supercoils closed circular double-stranded (ds) DNA in an ATP-dependent manner to modulate DNA topology and maintain chromosomes in an underwound state. Negative supercoiling favors strand separation, and DNA replication, transcription, recombination and repair, all of which involve strand separation. Also able to catalyze the interconversion of other topological isomers of dsDNA rings, including catenanes and knotted rings. Type II topoisomerases break and join 2 DNA strands simultaneously in an ATP-dependent manner. The protein is DNA gyrase subunit B of Chlamydia pneumoniae (Chlamydophila pneumoniae).